The primary structure comprises 479 residues: Cruciferin PGCRURSE5 (479 aa).

The first 23 residues, 1 to 23 (MVKLAHLLVATFGVLLVLNGCLA), serve as a signal peptide directing secretion. 2 disulfide bridges follow: C37/C70 and C113/C296. In terms of domain architecture, Cupin type-1 1 spans 42–241 (LDVLQPTETI…ALKMQLRLAQ (200 aa)). A Phosphothreonine modification is found at T116. Disordered stretches follow at residues 117–144 (FMDS…GFRD), 196–219 (RTFR…QQQN), and 271–291 (YESE…DNGL). The span at 124-141 (QGQGQQGQQGQQGQQQQG) shows a compositional bias: low complexity. A Cupin type-1 2 domain is found at 302–451 (ENIDDPARAD…AFQISLEEAR (150 aa)). Phosphothreonine is present on residues T415 and T440.

The protein belongs to the 11S seed storage protein (globulins) family. As to quaternary structure, hexamer; each subunit is composed of an acidic and a basic chain derived from a single precursor and linked by a disulfide bond.

In terms of biological role, this is a seed storage protein. The sequence is that of Cruciferin PGCRURSE5 (CRURS) from Raphanus sativus (Radish).